Here is a 467-residue protein sequence, read N- to C-terminus: Chromosomal replication initiator protein DnaA (467 aa).

The interval 1–74 is domain I, interacts with DnaA modulators; it reads MSADVWSQGC…ESVLSDLAGK (74 aa). The segment at 74 to 130 is domain II; the sequence is KPVRLDLQLAAREAPPRPSSDAPRSNGHPQAAGQWLGAPSSSNAGAYTQASAPTPTH. The disordered stretch occupies residues 85 to 127; that stretch reads REAPPRPSSDAPRSNGHPQAAGQWLGAPSSSNAGAYTQASAPT. The segment covering 112–127 has biased composition (polar residues); the sequence is PSSSNAGAYTQASAPT. The tract at residues 131–347 is domain III, AAA+ region; that stretch reads RLNTALTFDT…GALRKVLAYA (217 aa). Residues glycine 175, glycine 177, lysine 178, and threonine 179 each contribute to the ATP site. The interval 348 to 467 is domain IV, binds dsDNA; the sequence is RFSQKDINIA…LHVLEQTLKG (120 aa).

This sequence belongs to the DnaA family. In terms of assembly, oligomerizes as a right-handed, spiral filament on DNA at oriC.

It is found in the cytoplasm. Plays an essential role in the initiation and regulation of chromosomal replication. ATP-DnaA binds to the origin of replication (oriC) to initiate formation of the DNA replication initiation complex once per cell cycle. Binds the DnaA box (a 9 base pair repeat at the origin) and separates the double-stranded (ds)DNA. Forms a right-handed helical filament on oriC DNA; dsDNA binds to the exterior of the filament while single-stranded (ss)DNA is stabiized in the filament's interior. The ATP-DnaA-oriC complex binds and stabilizes one strand of the AT-rich DNA unwinding element (DUE), permitting loading of DNA polymerase. After initiation quickly degrades to an ADP-DnaA complex that is not apt for DNA replication. Binds acidic phospholipids. In Methylibium petroleiphilum (strain ATCC BAA-1232 / LMG 22953 / PM1), this protein is Chromosomal replication initiator protein DnaA.